A 580-amino-acid polypeptide reads, in one-letter code: Frizzled (580 aa).

The N-terminal stretch at 1-17 (MLLQPLLLLLLPALLQS) is a signal peptide. Residues 18–248 (AQRYDQTPLD…ERERTVLRYW (231 aa)) lie on the Extracellular side of the membrane. The region spanning 48–166 (PHHNRCEPIT…HGGEDLCVAE (119 aa)) is the FZ domain. Disulfide bonds link cysteine 53-cysteine 114, cysteine 61-cysteine 107, cysteine 98-cysteine 134, cysteine 124-cysteine 163, and cysteine 128-cysteine 151. Asparagine 67 is a glycosylation site (N-linked (GlcNAc...) asparagine). A glycan (N-linked (GlcNAc...) asparagine) is linked at asparagine 167. A helical transmembrane segment spans residues 249–269 (VGSWAAICVASCLFTVLTFLI). The Cytoplasmic segment spans residues 270–279 (DSSRFRYPER). Residues 280 to 300 (AIVFLAVCYLVVGCAYVAGLG) form a helical membrane-spanning segment. Residues 301-342 (AGDSVSCREPFPPPVKLGRLQMMSTITQGHRQTTACTVLFMA) lie on the Extracellular side of the membrane. Residues 343-363 (LYFCCMAAFAWWSCLAFAWFL) form a helical membrane-spanning segment. Residues 364-379 (AAGLKWGHEAIENKSH) are Cytoplasmic-facing. A helical membrane pass occupies residues 380–400 (LFHLVAWAVPALQTISVLALA). At 401–424 (KVEGDILSGVCFVGQLDTHSLGGF) the chain is on the extracellular side. The helical transmembrane segment at 425-445 (LILPLCIYLSIGALFLLAGFI) threads the bilayer. The Cytoplasmic portion of the chain corresponds to 446–470 (SLFRIRTVMKTDGKRTDKLERLMLR). Residues 471 to 491 (IGFFSGLFILPALGLLGCLFY) form a helical membrane-spanning segment. Topologically, residues 492 to 531 (EYYNFDEWMIQWHRDICKPFSIPCPAARPPGTPEARPIFQ) are extracellular. The chain crosses the membrane as a helical span at residues 532–552 (IYMVKYLCSMLVGVTSSVWLY). At 553 to 580 (SSKTMVSWRNFVERLQGKEPRTRAQAYV) the chain is on the cytoplasmic side. The Lys-Thr-X-X-X-Trp motif, mediates interaction with the PDZ domain of Dvl family members motif lies at 555-560 (KTMVSW). Positions 578–580 (AYV) match the PDZ-binding motif.

The protein belongs to the G-protein coupled receptor Fz/Smo family.

The protein resides in the cell membrane. Functionally, receptor for Wnt proteins. Most of frizzled receptors are coupled to the beta-catenin canonical signaling pathway, which leads to the activation of disheveled proteins, inhibition of GSK-3 kinase, nuclear accumulation of beta-catenin and activation of Wnt target genes. A second signaling pathway involving PKC and calcium fluxes has been seen for some family members, but it is not yet clear if it represents a distinct pathway or if it can be integrated in the canonical pathway, as PKC seems to be required for Wnt-mediated inactivation of GSK-3 kinase. Both pathways seem to involve interactions with G-proteins. Required to coordinate the cytoskeletons of epidermal cells to produce a parallel array of cuticular hairs and bristles. The chain is Frizzled (fz) from Drosophila virilis (Fruit fly).